The primary structure comprises 199 residues: ATP-dependent Clp protease proteolytic subunit (199 aa).

Serine 99 functions as the Nucleophile in the catalytic mechanism. The active site involves histidine 124.

It belongs to the peptidase S14 family. In terms of assembly, fourteen ClpP subunits assemble into 2 heptameric rings which stack back to back to give a disk-like structure with a central cavity, resembling the structure of eukaryotic proteasomes.

Its subcellular location is the cytoplasm. The enzyme catalyses Hydrolysis of proteins to small peptides in the presence of ATP and magnesium. alpha-casein is the usual test substrate. In the absence of ATP, only oligopeptides shorter than five residues are hydrolyzed (such as succinyl-Leu-Tyr-|-NHMec, and Leu-Tyr-Leu-|-Tyr-Trp, in which cleavage of the -Tyr-|-Leu- and -Tyr-|-Trp bonds also occurs).. Its function is as follows. Cleaves peptides in various proteins in a process that requires ATP hydrolysis. Has a chymotrypsin-like activity. Plays a major role in the degradation of misfolded proteins. In Lactococcus lactis subsp. cremoris (strain SK11), this protein is ATP-dependent Clp protease proteolytic subunit.